The sequence spans 325 residues: Ribose-phosphate pyrophosphokinase (325 aa).

ATP is bound by residues 45 to 47 (NGE) and 104 to 105 (RQ). Mg(2+)-binding residues include histidine 138 and aspartate 178. Lysine 202 is an active-site residue. D-ribose 5-phosphate-binding positions include arginine 204, aspartate 230, and 234–238 (DTGGT).

It belongs to the ribose-phosphate pyrophosphokinase family. Class I subfamily. In terms of assembly, homohexamer. Mg(2+) is required as a cofactor.

It is found in the cytoplasm. It carries out the reaction D-ribose 5-phosphate + ATP = 5-phospho-alpha-D-ribose 1-diphosphate + AMP + H(+). It participates in metabolic intermediate biosynthesis; 5-phospho-alpha-D-ribose 1-diphosphate biosynthesis; 5-phospho-alpha-D-ribose 1-diphosphate from D-ribose 5-phosphate (route I): step 1/1. Involved in the biosynthesis of the central metabolite phospho-alpha-D-ribosyl-1-pyrophosphate (PRPP) via the transfer of pyrophosphoryl group from ATP to 1-hydroxyl of ribose-5-phosphate (Rib-5-P). This Corynebacterium efficiens (strain DSM 44549 / YS-314 / AJ 12310 / JCM 11189 / NBRC 100395) protein is Ribose-phosphate pyrophosphokinase.